Here is a 262-residue protein sequence, read N- to C-terminus: Spindlin-1 (262 aa).

A disordered region spans residues 1–49 (MKTPFGKTPGQRSRADAGHAGVSANMMKKRTSHKKHRTSVGPSKPVSQP). Glycyl lysine isopeptide (Lys-Gly) (interchain with G-Cter in SUMO2) cross-links involve residues K7 and K28. Residues 27 to 38 (MKKRTSHKKHRT) are compositionally biased toward basic residues. K44 is modified (N6-acetyllysine; alternate). K44 is covalently cross-linked (Glycyl lysine isopeptide (Lys-Gly) (interchain with G-Cter in SUMO2); alternate). The tract at residues 53-116 (IVGCRIQHGW…RVSALEVLPD (64 aa)) is tudor-like domain 1. The tract at residues 93–98 (GFDCVY) is histone H3K4me3 and H3R8me2a binding. Residues S109 and S124 each carry the phosphoserine; by AURKA modification. The tract at residues 132–193 (MIGKAVEHMF…DYKEGDLRIM (62 aa)) is tudor-like domain 2. Position 142 (E142) is a region of interest, histone H3K4me3 and H3R8me2a binding. S199 carries the post-translational modification Phosphoserine. A tudor-like domain 3 region spans residues 213 to 262 (LVGKQVEYAKEDGSKRTGMVIHQVEAKPSVYFIKFDDDFHIYVYDLVKTS). The interval 250–252 (DFH) is histone H3K4me3 and H3R8me2a binding.

The protein belongs to the SPIN/STSY family. In terms of assembly, homodimer; may form higher-order oligomers. Interacts with TCF7L2/TCF4; the interaction is direct. Interacts with HABP4 and SERBP1. Interacts with SPINDOC; SPINDOC stabilizes SPIN1 and enhances its association with bivalent H3K4me3K9me3 mark. Interacts with SPOCD1; promoting recruitment of PIWIL4 and SPOCD1 to transposons. In terms of processing, phosphorylated during oocyte meiotic maturation.

Its subcellular location is the nucleus. The protein resides in the nucleolus. Functionally, chromatin reader that specifically recognizes and binds histone H3 both trimethylated at 'Lys-4' and 'Lys-9' (H3K4me3K9me3) and is involved in piRNA-mediated retrotransposon silencing during spermatogenesis. Plays a key role in the initiation of the PIWIL4-piRNA pathway, a pathway that directs transposon DNA methylation and silencing in the male embryonic germ cells, by promoting recruitment of DNA methylation machinery to transposons: binds young, but not old, LINE1 transposons, which are specifically marked with H3K4me3K9me3, and promotes the recruitment of PIWIL4 and SPOCD1 to transposons, leading to piRNA-directed DNA methylation. Also recognizes and binds histone H3 both trimethylated at 'Lys-4' and asymmetrically dimethylated at 'Arg-8' (H3K4me3 and H3R8me2a) and acts as an activator of Wnt signaling pathway downstream of PRMT2. Overexpression induces metaphase arrest and chromosomal instability. Overexpression induces metaphase arrest and chromosomal instability. Localizes to active rDNA loci and promotes the expression of rRNA genes. May play a role in cell-cycle regulation during the transition from gamete to embryo. Involved in oocyte meiotic resumption, a process that takes place before ovulation to resume meiosis of oocytes blocked in prophase I: may act by regulating maternal transcripts to control meiotic resumption. In Rattus norvegicus (Rat), this protein is Spindlin-1 (Spin1).